The following is a 133-amino-acid chain: MLKPKKTKFHKYHRGKIKGKIYDNVNFGEFALQSLEFGWITSKQIEAIRKVITRYSKKGGKLWIRIFPDKPITFRPAETRMGSGKGNVEYWVAVIKPGKIICEISGIPNSISKYCLKIAGYKLPVKTKILYKN.

Belongs to the universal ribosomal protein uL16 family. Part of the 50S ribosomal subunit.

It localises to the plastid. The sequence is that of Large ribosomal subunit protein uL16c from Euglena longa (Euglenophycean alga).